A 334-amino-acid polypeptide reads, in one-letter code: Leucine carboxyl methyltransferase 1 (334 aa).

S-adenosyl-L-methionine-binding positions include lysine 37, arginine 73, glycine 98, aspartate 122, 171–172 (DL), and glutamate 198.

This sequence belongs to the methyltransferase superfamily. LCMT family.

It catalyses the reaction [phosphatase 2A protein]-C-terminal L-leucine + S-adenosyl-L-methionine = [phosphatase 2A protein]-C-terminal L-leucine methyl ester + S-adenosyl-L-homocysteine. Methylates the carboxyl group of the C-terminal leucine residue of protein phosphatase 2A catalytic subunits to form alpha-leucine ester residues. The sequence is that of Leucine carboxyl methyltransferase 1 (LCMT1) from Homo sapiens (Human).